A 109-amino-acid chain; its full sequence is Small ribosomal subunit protein uS10 (109 aa).

This sequence belongs to the universal ribosomal protein uS10 family. Part of the 30S ribosomal subunit.

Functionally, involved in the binding of tRNA to the ribosomes. The sequence is that of Small ribosomal subunit protein uS10 from Nanoarchaeum equitans (strain Kin4-M).